The sequence spans 458 residues: Argininosuccinate lyase (458 aa).

Belongs to the lyase 1 family. Argininosuccinate lyase subfamily.

It localises to the cytoplasm. The catalysed reaction is 2-(N(omega)-L-arginino)succinate = fumarate + L-arginine. Its pathway is amino-acid biosynthesis; L-arginine biosynthesis; L-arginine from L-ornithine and carbamoyl phosphate: step 3/3. The protein is Argininosuccinate lyase of Heliobacterium mobile (Heliobacillus mobilis).